The chain runs to 177 residues: Peptide methionine sulfoxide reductase MsrA (177 aa).

Cys11 is a catalytic residue.

This sequence belongs to the MsrA Met sulfoxide reductase family.

It catalyses the reaction L-methionyl-[protein] + [thioredoxin]-disulfide + H2O = L-methionyl-(S)-S-oxide-[protein] + [thioredoxin]-dithiol. The catalysed reaction is [thioredoxin]-disulfide + L-methionine + H2O = L-methionine (S)-S-oxide + [thioredoxin]-dithiol. Functionally, has an important function as a repair enzyme for proteins that have been inactivated by oxidation. Catalyzes the reversible oxidation-reduction of methionine sulfoxide in proteins to methionine. This chain is Peptide methionine sulfoxide reductase MsrA, found in Picrophilus torridus (strain ATCC 700027 / DSM 9790 / JCM 10055 / NBRC 100828 / KAW 2/3).